The chain runs to 393 residues: Cytochrome b (393 aa).

A run of 4 helical transmembrane segments spans residues 38–58, 82–104, 119–139, and 185–205; these read FGSLAGICLVIQIVTGVFLAM, WLLRYMHANGASMFFIVVYLHIF, VWCLGVVIFLLMIVTAFIGYV, and FFSLHYLLPFILVGASLLHLA. H88 and H102 together coordinate heme b. Residues H189 and H203 each contribute to the heme b site. Residue H208 coordinates a ubiquinone. 4 helical membrane passes run 231-251, 295-315, 327-347, and 354-373; these read FYVKDLVGWVAFAIFFSIWIF, VGGVAAIALVFICLLALPFFK, IYQGIFWLLLADCLLLGWIGC, and FVTIGQISSLVFFLFFAITP.

This sequence belongs to the cytochrome b family. As to quaternary structure, the main subunits of complex b-c1 are: cytochrome b, cytochrome c1 and the Rieske protein. It depends on heme b as a cofactor. In terms of processing, first mitochondrial-encoded protein to be shown to have its N-terminal methionine cleaved off.

Its subcellular location is the mitochondrion inner membrane. Functionally, component of the ubiquinol-cytochrome c reductase complex (complex III or cytochrome b-c1 complex) that is part of the mitochondrial respiratory chain. The b-c1 complex mediates electron transfer from ubiquinol to cytochrome c. Contributes to the generation of a proton gradient across the mitochondrial membrane that is then used for ATP synthesis. This chain is Cytochrome b (MT-CYB), found in Solanum tuberosum (Potato).